The primary structure comprises 87 residues: Small ribosomal subunit protein uS17 (87 aa).

Belongs to the universal ribosomal protein uS17 family. Part of the 30S ribosomal subunit.

Its function is as follows. One of the primary rRNA binding proteins, it binds specifically to the 5'-end of 16S ribosomal RNA. This Listeria innocua serovar 6a (strain ATCC BAA-680 / CLIP 11262) protein is Small ribosomal subunit protein uS17.